Here is a 123-residue protein sequence, read N- to C-terminus: Aberrant microtubules protein 1 (123 aa).

Required for normal microtubule organization. This Saccharomyces cerevisiae (strain ATCC 204508 / S288c) (Baker's yeast) protein is Aberrant microtubules protein 1 (ABM1).